The chain runs to 269 residues: Indole-3-glycerol phosphate synthase 1 (269 aa).

It belongs to the TrpC family.

The catalysed reaction is 1-(2-carboxyphenylamino)-1-deoxy-D-ribulose 5-phosphate + H(+) = (1S,2R)-1-C-(indol-3-yl)glycerol 3-phosphate + CO2 + H2O. Its pathway is amino-acid biosynthesis; L-tryptophan biosynthesis; L-tryptophan from chorismate: step 4/5. The polypeptide is Indole-3-glycerol phosphate synthase 1 (trpC1) (Streptomyces coelicolor (strain ATCC BAA-471 / A3(2) / M145)).